The sequence spans 217 residues: Translation initiation factor 6 (217 aa).

It belongs to the eIF-6 family.

Functionally, binds to the 50S ribosomal subunit and prevents its association with the 30S ribosomal subunit to form the 70S initiation complex. This Picrophilus torridus (strain ATCC 700027 / DSM 9790 / JCM 10055 / NBRC 100828 / KAW 2/3) protein is Translation initiation factor 6.